Consider the following 278-residue polypeptide: HTH-type transcriptional activator RhaS (278 aa).

The region spanning 174–272 (NLLLAWLEDH…NWSPRDIRQG (99 aa)) is the HTH araC/xylS-type domain. 2 DNA-binding regions (H-T-H motif) span residues 191–212 (DAVADQFSLSLRTLHRQLKQQT) and 239–262 (VTDIAYRCGFSDSNHFSTLFRREF).

In terms of assembly, binds DNA as a dimer.

Its subcellular location is the cytoplasm. In terms of biological role, activates expression of the rhaBAD and rhaT operons. This Escherichia coli O127:H6 (strain E2348/69 / EPEC) protein is HTH-type transcriptional activator RhaS.